Here is a 252-residue protein sequence, read N- to C-terminus: Trans-aconitate 2-methyltransferase (252 aa).

The protein belongs to the methyltransferase superfamily. Tam family.

The protein localises to the cytoplasm. The enzyme catalyses trans-aconitate + S-adenosyl-L-methionine = (E)-3-(methoxycarbonyl)pent-2-enedioate + S-adenosyl-L-homocysteine. Its function is as follows. Catalyzes the S-adenosylmethionine monomethyl esterification of trans-aconitate. The sequence is that of Trans-aconitate 2-methyltransferase from Escherichia coli O6:K15:H31 (strain 536 / UPEC).